A 364-amino-acid polypeptide reads, in one-letter code: Long-wave-sensitive opsin 1 (364 aa).

At Met-1–Ala-58 the chain is on the extracellular side. A glycan (O-linked (GlcNAc) serine) is linked at Ser-22. Residue Asn-34 is glycosylated (N-linked (GlcNAc...) asparagine). Residues Trp-59 to Met-79 traverse the membrane as a helical segment. At Arg-80 to Trp-90 the chain is on the cytoplasmic side. The chain crosses the membrane as a helical span at residues Ile-91–Val-111. The Extracellular segment spans residues Val-112–Cys-126. Cys-126 and Cys-203 are oxidised to a cystine. Residues Val-127–Ile-147 form a helical membrane-spanning segment. Over Ser-148 to Leu-168 the chain is Cytoplasmic. Residues Ala-169 to Phe-189 form a helical membrane-spanning segment. The Extracellular segment spans residues Gly-190–Tyr-219. The chain crosses the membrane as a helical span at residues Met-220 to Leu-240. Over Gln-241 to Met-269 the chain is Cytoplasmic. Residues Val-270–Phe-290 traverse the membrane as a helical segment. The Extracellular portion of the chain corresponds to Ala-291–Pro-301. A helical membrane pass occupies residues Leu-302–Phe-324. At Lys-312 the chain carries N6-(retinylidene)lysine. Residues Met-325–Ala-364 are Cytoplasmic-facing.

The protein belongs to the G-protein coupled receptor 1 family. Opsin subfamily. Phosphorylated on some or all of the serine and threonine residues present in the C-terminal region. As to expression, the three color pigments are found in the cone photoreceptor cells.

Its subcellular location is the membrane. Visual pigments are the light-absorbing molecules that mediate vision. They consist of an apoprotein, opsin, covalently linked to cis-retinal. This is Long-wave-sensitive opsin 1 (OPN1LW) from Canis lupus familiaris (Dog).